We begin with the raw amino-acid sequence, 287 residues long: uncharacterized protein (287 aa).

Residues 183-281 (WEAARYLQEH…GISPIEYRKI (99 aa)) enclose the HTH araC/xylS-type domain. 2 DNA-binding regions (H-T-H motif) span residues 200 to 221 (KDLS…QQVL) and 248 to 271 (MGVI…KQIE).

This is an uncharacterized protein from Bacillus subtilis (strain 168).